The sequence spans 290 residues: MPVTVAASRLGTAAFDQSPVELRANYSRDDAQTVIRAVYRQVLGNDYVMSSERLTAAESLFTNGFISVRDFVRAVAQSELYKEKFLYNNFQTRVIELNFKHLLGRAPYDEAEVIEHLDRYQNEGFEADINSYIDSAEYTENFGDNIVPYIRSYVVQTGHRTVGFTRMFSLQRGYANSDRAQIAGNASRLAQELARNTTSAVVGPSGVNEGWAFRSAADDYHPGQSLGGSTGLSADDQVVRVEVAALSTPRYPRIRRSSRVFFVPVSRLSQKLQEIQRMGGRVASISPAGQ.

In terms of domain architecture, PBS-linker spans methionine 1–arginine 179. A CpcD-like domain is found at aspartate 236 to alanine 288.

The protein belongs to the phycobilisome linker protein family.

It is found in the cellular thylakoid membrane. Rod linker protein, associated with phycocyanin. Linker polypeptides determine the state of aggregation and the location of the disk-shaped phycobiliprotein units within the phycobilisome and modulate their spectroscopic properties in order to mediate a directed and optimal energy transfer. The chain is Phycobilisome 32.3 kDa linker polypeptide, phycocyanin-associated, rod (cpcC) from Picosynechococcus sp. (strain ATCC 27264 / PCC 7002 / PR-6) (Agmenellum quadruplicatum).